The chain runs to 188 residues: dCTP deaminase (188 aa).

Residues 111 to 116, 135 to 137, glutamine 156, tyrosine 170, lysine 179, and glutamine 180 contribute to the dCTP site; these read KSTYAR and TLE. Glutamate 137 (proton donor/acceptor) is an active-site residue.

This sequence belongs to the dCTP deaminase family. Homotrimer.

The catalysed reaction is dCTP + H2O + H(+) = dUTP + NH4(+). It participates in pyrimidine metabolism; dUMP biosynthesis; dUMP from dCTP (dUTP route): step 1/2. Functionally, catalyzes the deamination of dCTP to dUTP. The chain is dCTP deaminase from Orientia tsutsugamushi (strain Ikeda) (Rickettsia tsutsugamushi).